Here is a 173-residue protein sequence, read N- to C-terminus: Archaemetzincin (173 aa).

His130 lines the Zn(2+) pocket. The active-site Proton acceptor is Glu131. Residues His134, His140, Cys141, Cys146, Cys165, and Cys168 each contribute to the Zn(2+) site.

This sequence belongs to the peptidase M54 family. In terms of assembly, monomer. The cofactor is Zn(2+).

In terms of biological role, probable zinc metalloprotease whose natural substrate is unknown. This is Archaemetzincin from Haloarcula marismortui (strain ATCC 43049 / DSM 3752 / JCM 8966 / VKM B-1809) (Halobacterium marismortui).